Consider the following 346-residue polypeptide: MPRNDTVRALDWQGDHLKLLDQRRLPAETVWLDCHSAADTADAIRDMVVRGAPAIGIAAAYGVVLAARAAMARRPADWPAAMAADLARLRSARPTAVNLFWALDRMQQVVDSDPADPLAALEAAAVAIHEDDLTANRRMGELGAHLIPAGAGVLTHCNTGSLATGGYGTALGVIRSAWSGKGLSAVYADETRPWLQGARLTAWELVADGIPVRLIAEGAAPLLMQRGRVDWVIVGADRVAANGDTANKIGTYALALACKAHGVKFMVVAPSSTIDLDCPGGDRIPIEERPPEELLWLGDRRVAAEGAGAWNPVFDVTPAELIDVLVTERGVVTDFGGAGVRALING.

Substrate-binding positions include 50–52 (RGA), Arg93, and Gln196. The Proton donor role is filled by Asp237. Residue 247 to 248 (NK) participates in substrate binding.

Belongs to the eIF-2B alpha/beta/delta subunits family. MtnA subfamily.

The enzyme catalyses 5-(methylsulfanyl)-alpha-D-ribose 1-phosphate = 5-(methylsulfanyl)-D-ribulose 1-phosphate. The protein operates within amino-acid biosynthesis; L-methionine biosynthesis via salvage pathway; L-methionine from S-methyl-5-thio-alpha-D-ribose 1-phosphate: step 1/6. Catalyzes the interconversion of methylthioribose-1-phosphate (MTR-1-P) into methylthioribulose-1-phosphate (MTRu-1-P). The polypeptide is Methylthioribose-1-phosphate isomerase (Alkalilimnicola ehrlichii (strain ATCC BAA-1101 / DSM 17681 / MLHE-1)).